A 266-amino-acid polypeptide reads, in one-letter code: Nickel import ATP-binding protein NikE (266 aa).

In terms of domain architecture, ABC transporter spans 4–252 (ISADNIVKIY…RHPASRLLRE (249 aa)). 45–52 (GRSGCGKS) provides a ligand contact to ATP.

This sequence belongs to the ABC transporter superfamily. Nickel importer (TC 3.A.1.5.3) family. The complex is composed of two ATP-binding proteins (NikD and NikE), two transmembrane proteins (NikB and NikC) and a solute-binding protein (NikA).

Its subcellular location is the cell inner membrane. The catalysed reaction is Ni(2+)(out) + ATP + H2O = Ni(2+)(in) + ADP + phosphate + H(+). In terms of biological role, part of the ABC transporter complex NikABCDE involved in nickel import. Responsible for energy coupling to the transport system. The protein is Nickel import ATP-binding protein NikE of Brucella abortus (strain 2308).